The chain runs to 377 residues: Putative glutamate--cysteine ligase 2 (377 aa).

Belongs to the glutamate--cysteine ligase type 2 family. YbdK subfamily.

The enzyme catalyses L-cysteine + L-glutamate + ATP = gamma-L-glutamyl-L-cysteine + ADP + phosphate + H(+). Functionally, ATP-dependent carboxylate-amine ligase which exhibits weak glutamate--cysteine ligase activity. The polypeptide is Putative glutamate--cysteine ligase 2 (Ralstonia pickettii (strain 12J)).